The following is a 286-amino-acid chain: Pantothenate synthetase (286 aa).

Residue 31-38 (MGALHEGH) coordinates ATP. Catalysis depends on H38, which acts as the Proton donor. Q65 provides a ligand contact to (R)-pantoate. Q65 serves as a coordination point for beta-alanine. ATP is bound at residue 153-156 (GEKD). Q159 serves as a coordination point for (R)-pantoate. 190-193 (LSSR) contacts ATP.

The protein belongs to the pantothenate synthetase family. Homodimer.

Its subcellular location is the cytoplasm. The catalysed reaction is (R)-pantoate + beta-alanine + ATP = (R)-pantothenate + AMP + diphosphate + H(+). The protein operates within cofactor biosynthesis; (R)-pantothenate biosynthesis; (R)-pantothenate from (R)-pantoate and beta-alanine: step 1/1. Its function is as follows. Catalyzes the condensation of pantoate with beta-alanine in an ATP-dependent reaction via a pantoyl-adenylate intermediate. The chain is Pantothenate synthetase from Corynebacterium diphtheriae (strain ATCC 700971 / NCTC 13129 / Biotype gravis).